The following is an 833-amino-acid chain: Leucine--tRNA ligase (833 aa).

A 'HIGH' region motif is present at residues 41 to 52 (PYPSGAGLHVGH). The 'KMSKS' region motif lies at 610-614 (KMSKS). Residue Lys-613 coordinates ATP.

Belongs to the class-I aminoacyl-tRNA synthetase family.

It localises to the cytoplasm. The enzyme catalyses tRNA(Leu) + L-leucine + ATP = L-leucyl-tRNA(Leu) + AMP + diphosphate. The protein is Leucine--tRNA ligase of Streptococcus mutans serotype c (strain ATCC 700610 / UA159).